A 344-amino-acid chain; its full sequence is Protein RecA (344 aa).

An ATP-binding site is contributed by 65 to 72; that stretch reads GPESSGKT. The segment covering 323–337 has biased composition (basic and acidic residues); that stretch reads ELREKFQPAEAPREA. The interval 323 to 344 is disordered; it reads ELREKFQPAEAPREAGDDEDKE.

This sequence belongs to the RecA family.

The protein resides in the cytoplasm. Its function is as follows. Can catalyze the hydrolysis of ATP in the presence of single-stranded DNA, the ATP-dependent uptake of single-stranded DNA by duplex DNA, and the ATP-dependent hybridization of homologous single-stranded DNAs. It interacts with LexA causing its activation and leading to its autocatalytic cleavage. The protein is Protein RecA of Xanthomonas euvesicatoria pv. vesicatoria (strain 85-10) (Xanthomonas campestris pv. vesicatoria).